The chain runs to 118 residues: Holo-[acyl-carrier-protein] synthase (118 aa).

Asp-8 and Glu-58 together coordinate Mg(2+).

It belongs to the P-Pant transferase superfamily. AcpS family. Mg(2+) is required as a cofactor.

It is found in the cytoplasm. The catalysed reaction is apo-[ACP] + CoA = holo-[ACP] + adenosine 3',5'-bisphosphate + H(+). Transfers the 4'-phosphopantetheine moiety from coenzyme A to a Ser of acyl-carrier-protein. This Streptococcus pyogenes serotype M1 protein is Holo-[acyl-carrier-protein] synthase.